The primary structure comprises 721 residues: Polyribonucleotide nucleotidyltransferase (721 aa).

Positions 487 and 493 each coordinate Mg(2+). One can recognise a KH domain in the interval 554 to 613 (PRIETFKIPTDKIREVIGTGGKVIREIVEKTGAKVNIDDDGTVKVASSDGESIKAAIKWI). The S1 motif domain occupies 623 to 691 (NAIYDGTVVK…DRGKTRLSMK (69 aa)). The tract at residues 697–721 (TGEDLEAKQKAEAEKAKAEGAPAAE) is disordered. Basic and acidic residues predominate over residues 701 to 714 (LEAKQKAEAEKAKA).

The protein belongs to the polyribonucleotide nucleotidyltransferase family. The cofactor is Mg(2+).

It is found in the cytoplasm. It catalyses the reaction RNA(n+1) + phosphate = RNA(n) + a ribonucleoside 5'-diphosphate. Its function is as follows. Involved in mRNA degradation. Catalyzes the phosphorolysis of single-stranded polyribonucleotides processively in the 3'- to 5'-direction. The polypeptide is Polyribonucleotide nucleotidyltransferase (Rhodopseudomonas palustris (strain BisA53)).